We begin with the raw amino-acid sequence, 178 residues long: uncharacterized protein (178 aa).

4 helical membrane passes run 3-23 (IPII…FISI), 56-76 (IFLM…NLIF), 101-121 (LILP…VAGF), and 150-170 (LSLI…YITP).

This sequence to M.jannaschii MJ0706 and Synechocystis PCC 6803 slr1478.

Its subcellular location is the cell membrane. This is an uncharacterized protein from Methanocaldococcus jannaschii (strain ATCC 43067 / DSM 2661 / JAL-1 / JCM 10045 / NBRC 100440) (Methanococcus jannaschii).